Consider the following 273-residue polypeptide: MNKYFTCYVVASLFLSGCTVQHNLINETPSQIVQGHNQVIHQYFDEKNTSGVLVIQTDKKINLYGNALSRANTEYVPASTFKMLNALIGLENQKTDINEIFKWKGEKRSFTAWEKDMTLGEAMKLSAVPVYQELARRIGLDLMQKEVKRIGFGNAEIGQQVDNFWLVGPLKVTPIQEVEFVSQLAHTQLPFSEKVQANVKNMLLLEESNGYKIFGKTGWAMDIKPQVGWLTGWVEQPDGKIVAFALNMEMRSEMPASIRNELLMKSLKQLNII.

The N-terminal stretch at 1-17 is a signal peptide; that stretch reads MNKYFTCYVVASLFLSG. Ser79 serves as the catalytic Acyl-ester intermediate. Residues Ser79, Lys82, Ser126, Thr217, Trp219, and Arg259 each coordinate a beta-lactam. Lys82 is subject to N6-carboxylysine.

This sequence belongs to the class-D beta-lactamase family. Monomer. In terms of processing, carboxylated on the epsilon-amino group of a lysine, with the resulting carbamate functional group serving as a general base. Probably N-carboxylated at Lys-82 at neutral pH in vivo and undergoes complete N-decarboxylation, at pH 4.1, in vitro.

The protein localises to the periplasm. The catalysed reaction is a beta-lactam + H2O = a substituted beta-amino acid. With respect to regulation, inhibited by the desmethyl carbapenem, MA-1-206, via a covalent binding to Ser-79. Functionally, class D beta-lactamase which confers resistance to the beta-lactam antibiotics, including ampicillin, and carbapenems such as imipenem and meropenem. Acts via hydrolysis of the beta-lactam ring. Has penicillin-, cephalosporin- and carbapenem-hydrolyzing activities, but lacks ceftazidime-hydrolyzing activity. The chain is Beta-lactamase OXA-23 from Acinetobacter baumannii.